Reading from the N-terminus, the 212-residue chain is Probable GTP-binding protein EngB (212 aa).

The region spanning S38–P210 is the EngB-type G domain. Residues G46–S53, G73–Q77, D91–G94, T158–D161, and V189–S191 contribute to the GTP site. The Mg(2+) site is built by S53 and T75.

The protein belongs to the TRAFAC class TrmE-Era-EngA-EngB-Septin-like GTPase superfamily. EngB GTPase family. It depends on Mg(2+) as a cofactor.

In terms of biological role, necessary for normal cell division and for the maintenance of normal septation. The chain is Probable GTP-binding protein EngB from Rickettsia felis (strain ATCC VR-1525 / URRWXCal2) (Rickettsia azadi).